The chain runs to 388 residues: (S)-8-oxocitronellyl enol synthase ISY1 (388 aa).

NADP(+) contacts are provided by residues 35–37, 63–64, 81–82, 105–106, and Q143; these read TGI, RR, DV, and TW. Catalysis depends on residues K147 and Y178. Residues Y178, I205, and 212 to 214 each bind NADP(+); that span reads SMM.

The protein belongs to the short-chain dehydrogenases/reductases (SDR) family.

The enzyme catalyses (S)-8-oxocitronellyl enol + NADP(+) = (6E)-8-oxogeranial + NADPH + H(+). It carries out the reaction (S)-8-oxocitronellyl enol + NAD(+) = (6E)-8-oxogeranial + NADH + H(+). In terms of biological role, iridoid synthase that catalyzes the first step in generation of the iridoid ring scaffold using the linear monoterpene (6E)-8-oxogeranial as substrate. Iridoids comprise a large family of distinctive bicyclic monoterpenes that possess a wide range of pharmacological activities, including anticancer, anti-inflammatory, antifungal and antibacterial activities. Catalyzes the conversion of the linear monoterpene (6E)-8-oxogeranial to (S)-8-oxocitronellyl enol, a precursor of nepetalactones, which are metabolites that are both insect-repellent and have euphoric effect in cats. In Nepeta racemosa (Catmint), this protein is (S)-8-oxocitronellyl enol synthase ISY1.